Consider the following 135-residue polypeptide: MTMTDPIADMLTRLRNANQAYHDQTSMPHSKIKAGIAGILKSEGYIADYKVNEPKEGEVGKTLTLTLKYGENRERSIAGVRRISKPGLRVYAKSTALPKVLGGLGIAIISTSQGLLTDKQAHEKSVGGEVLAYVW.

This sequence belongs to the universal ribosomal protein uS8 family. In terms of assembly, part of the 30S ribosomal subunit. Contacts proteins S5 and S12.

Functionally, one of the primary rRNA binding proteins, it binds directly to 16S rRNA central domain where it helps coordinate assembly of the platform of the 30S subunit. This is Small ribosomal subunit protein uS8 from Cutibacterium acnes (strain DSM 16379 / KPA171202) (Propionibacterium acnes).